The chain runs to 370 residues: Quinolinate synthase (370 aa).

Iminosuccinate is bound by residues His-62 and Ser-83. Cys-128 serves as a coordination point for [4Fe-4S] cluster. Residues 154 to 156 (YAN) and Ser-171 contribute to the iminosuccinate site. Residue Cys-215 participates in [4Fe-4S] cluster binding. Iminosuccinate-binding positions include 241–243 (HPE) and Thr-258. Cys-312 contributes to the [4Fe-4S] cluster binding site.

Belongs to the quinolinate synthase family. Type 1 subfamily. The cofactor is [4Fe-4S] cluster.

The protein resides in the cytoplasm. The catalysed reaction is iminosuccinate + dihydroxyacetone phosphate = quinolinate + phosphate + 2 H2O + H(+). Its pathway is cofactor biosynthesis; NAD(+) biosynthesis; quinolinate from iminoaspartate: step 1/1. Functionally, catalyzes the condensation of iminoaspartate with dihydroxyacetone phosphate to form quinolinate. The chain is Quinolinate synthase from Neisseria gonorrhoeae (strain ATCC 700825 / FA 1090).